We begin with the raw amino-acid sequence, 360 residues long: UDP-N-acetylglucosamine--N-acetylmuramyl-(pentapeptide) pyrophosphoryl-undecaprenol N-acetylglucosamine transferase (360 aa).

UDP-N-acetyl-alpha-D-glucosamine-binding positions include Thr-15–Gly-17, Asn-124, Arg-165, Ser-191, and Gln-285.

This sequence belongs to the glycosyltransferase 28 family. MurG subfamily.

The protein localises to the cell inner membrane. It catalyses the reaction di-trans,octa-cis-undecaprenyl diphospho-N-acetyl-alpha-D-muramoyl-L-alanyl-D-glutamyl-meso-2,6-diaminopimeloyl-D-alanyl-D-alanine + UDP-N-acetyl-alpha-D-glucosamine = di-trans,octa-cis-undecaprenyl diphospho-[N-acetyl-alpha-D-glucosaminyl-(1-&gt;4)]-N-acetyl-alpha-D-muramoyl-L-alanyl-D-glutamyl-meso-2,6-diaminopimeloyl-D-alanyl-D-alanine + UDP + H(+). The protein operates within cell wall biogenesis; peptidoglycan biosynthesis. Functionally, cell wall formation. Catalyzes the transfer of a GlcNAc subunit on undecaprenyl-pyrophosphoryl-MurNAc-pentapeptide (lipid intermediate I) to form undecaprenyl-pyrophosphoryl-MurNAc-(pentapeptide)GlcNAc (lipid intermediate II). This chain is UDP-N-acetylglucosamine--N-acetylmuramyl-(pentapeptide) pyrophosphoryl-undecaprenol N-acetylglucosamine transferase, found in Gloeothece citriformis (strain PCC 7424) (Cyanothece sp. (strain PCC 7424)).